The following is a 369-amino-acid chain: MSASQNIVVSETTMSSIIPNNNNNNNNSSSQKLPPCLISISKKKLLKNIDIINGGGQRINAWVDSMRASSPTHLKSLPSSISTQQQLNSWIMQHPSALEKFEQIMEASRGKQIVMFLDYDGTLSPIVDDPDKAFMSSKMRRTVKKLAKCFPTAIVTGRCIDKVYNFVKLAELYYAGSHGMDIKGPAKGFSRHKRVKQSLLYQPANDYLPMIDEVYRQLLEKTKSTPGAKVENHKFCASVHFRCVDEKKWSELVLQVRSVLKKFPTLQLTQGRKVFEIRPMIEWDKGKALEFLLESLGFGNTNNVFPVYIGDDRTDEDAFKMLRDRGEGFGILVSKFPKDTDASYSLQDPSEVMDFLRRLVEWKQMQPRM.

Belongs to the trehalose phosphatase family. A divalent metal cation serves as cofactor.

The enzyme catalyses alpha,alpha-trehalose 6-phosphate + H2O = alpha,alpha-trehalose + phosphate. It functions in the pathway glycan biosynthesis; trehalose biosynthesis. Functionally, removes the phosphate from trehalose 6-phosphate to produce free trehalose. Trehalose accumulation in plant may improve abiotic stress tolerance. The chain is Probable trehalose-phosphate phosphatase I (TPPI) from Arabidopsis thaliana (Mouse-ear cress).